A 564-amino-acid chain; its full sequence is Hexose transporter HXT13 (564 aa).

The Cytoplasmic portion of the chain corresponds to 1-52; the sequence is MSSAQSSIDSDGDVRDADIHVAPPVEKEWSDGFDDNEVINGDNVEPPKRGLI. The chain crosses the membrane as a helical span at residues 53 to 73; the sequence is GYLVIYLLCYPISFGGFLPGW. At 74–109 the chain is on the extracellular side; sequence DSGITAGFINMDNFKMNFGSYKHSTGEYYLSNVRMG. Residues 110 to 130 traverse the membrane as a helical segment; that stretch reads LLVAMFSIGCAIGGLIFARLA. Topologically, residues 131–136 are cytoplasmic; the sequence is DTLGRR. The helical transmembrane segment at 137 to 157 threads the bilayer; that stretch reads LAIVIVVLVYMVGAIIQISSN. Over 158 to 167 the chain is Extracellular; sequence HKWYQYFVGK. Residues 168-188 traverse the membrane as a helical segment; sequence IIYGLGAGGCSVLCPMLLSEI. The Cytoplasmic portion of the chain corresponds to 189–194; that stretch reads APTDLR. Residues 195–215 traverse the membrane as a helical segment; sequence GGLVSLYQLNMTFGIFLGYCS. At 216–229 the chain is on the extracellular side; that stretch reads VYGTRKYDNTAQWR. A helical membrane pass occupies residues 230–250; sequence VPLGLCFLWALIIIIGMLLVP. Topologically, residues 251-333 are cytoplasmic; it reads ESPRYLIECE…VQTFLQLTGE (83 aa). Residues 334-350 form a helical membrane-spanning segment; sequence NYFFFYGTTIFKSVGLT. Topologically, residues 351-356 are extracellular; that stretch reads DGFETS. Residues 357–374 form a helical membrane-spanning segment; that stretch reads IVLGTVNFFSTIIAVMVV. The Cytoplasmic portion of the chain corresponds to 375–381; the sequence is DKIGRRK. Residues 382-402 traverse the membrane as a helical segment; the sequence is CLLFGAAGMMACMVIFASIGV. Over 403–424 the chain is Extracellular; that stretch reads KCLYPHGQDGPSSKGAGNAMIV. The helical transmembrane segment at 425–445 threads the bilayer; sequence FTCFYIFCFATTWAPVAYIVV. Topologically, residues 446 to 462 are cytoplasmic; sequence AESFPSKVKSRAMSIST. A helical transmembrane segment spans residues 463–483; sequence ACNWLWQFLIGFFTPFITGSI. His-484 is a topological domain (extracellular). Residues 485 to 505 form a helical membrane-spanning segment; that stretch reads FYYGYVFVGCLVAMFLYVFFF. The Cytoplasmic segment spans residues 506–564; that stretch reads LPETIGLSLEEIQLLYEEGIKPWKSASWVPPSRRGISSEESKTEKKDWKKFLKFSKNSD. Residues 530 to 551 form a disordered region; that stretch reads SASWVPPSRRGISSEESKTEKK. The segment covering 541–551 has biased composition (basic and acidic residues); the sequence is ISSEESKTEKK.

The protein belongs to the major facilitator superfamily. Sugar transporter (TC 2.A.1.1) family.

It is found in the membrane. Functionally, probable glucose transporter. The protein is Hexose transporter HXT13 (HXT13) of Saccharomyces cerevisiae (strain ATCC 204508 / S288c) (Baker's yeast).